Here is a 177-residue protein sequence, read N- to C-terminus: Ribosome maturation factor RimP (177 aa).

Belongs to the RimP family.

It localises to the cytoplasm. Required for maturation of 30S ribosomal subunits. The sequence is that of Ribosome maturation factor RimP from Methylibium petroleiphilum (strain ATCC BAA-1232 / LMG 22953 / PM1).